Here is a 599-residue protein sequence, read N- to C-terminus: Elongation factor 4 (599 aa).

In terms of domain architecture, tr-type G spans 4-186 (ENIRNFSIIA…EIVTKIPPPQ (183 aa)). GTP contacts are provided by residues 16–21 (DHGKST) and 133–136 (NKID).

This sequence belongs to the TRAFAC class translation factor GTPase superfamily. Classic translation factor GTPase family. LepA subfamily.

Its subcellular location is the cell inner membrane. It catalyses the reaction GTP + H2O = GDP + phosphate + H(+). Functionally, required for accurate and efficient protein synthesis under certain stress conditions. May act as a fidelity factor of the translation reaction, by catalyzing a one-codon backward translocation of tRNAs on improperly translocated ribosomes. Back-translocation proceeds from a post-translocation (POST) complex to a pre-translocation (PRE) complex, thus giving elongation factor G a second chance to translocate the tRNAs correctly. Binds to ribosomes in a GTP-dependent manner. The protein is Elongation factor 4 of Geotalea uraniireducens (strain Rf4) (Geobacter uraniireducens).